Consider the following 314-residue polypeptide: MKIVLANPRGFCAGVDRAISIVERALELYEAPIYVRHEVVHNRFVVEGLKQRGAIFVEELHEVPDDNIVIFSAHGVSQAVRKEAKERALTVFDATCPLVTKVHMEVARASKKNIEVVLIGHAGHPEVEGTMGQYASDSAGMYLVETPDDVIKLNVKDPSNLHYVSQTTLSVDETADVIDELRRVFPDIQGPRKDDICYATQNRQDAVRDMASQVDVMIVVGSKNSSNSNRLRELSEKLGTTSYLIDCPEDLKEEWLTDQAKVGVTAGASAPEELVNQIIEQVKAFGGTAVEELTGREENMFFEVPKELQIKTVS.

Cys-12 is a [4Fe-4S] cluster binding site. (2E)-4-hydroxy-3-methylbut-2-enyl diphosphate contacts are provided by His-41 and His-74. Residues His-41 and His-74 each contribute to the dimethylallyl diphosphate site. Positions 41 and 74 each coordinate isopentenyl diphosphate. Residue Cys-96 coordinates [4Fe-4S] cluster. His-124 provides a ligand contact to (2E)-4-hydroxy-3-methylbut-2-enyl diphosphate. His-124 provides a ligand contact to dimethylallyl diphosphate. Residue His-124 participates in isopentenyl diphosphate binding. The active-site Proton donor is the Glu-126. Thr-167 serves as a coordination point for (2E)-4-hydroxy-3-methylbut-2-enyl diphosphate. Residue Cys-197 coordinates [4Fe-4S] cluster. Ser-225, Ser-226, Asn-227, and Ser-269 together coordinate (2E)-4-hydroxy-3-methylbut-2-enyl diphosphate. Residues Ser-225, Ser-226, Asn-227, and Ser-269 each coordinate dimethylallyl diphosphate. Residues Ser-225, Ser-226, Asn-227, and Ser-269 each coordinate isopentenyl diphosphate.

The protein belongs to the IspH family. The cofactor is [4Fe-4S] cluster.

It carries out the reaction isopentenyl diphosphate + 2 oxidized [2Fe-2S]-[ferredoxin] + H2O = (2E)-4-hydroxy-3-methylbut-2-enyl diphosphate + 2 reduced [2Fe-2S]-[ferredoxin] + 2 H(+). The catalysed reaction is dimethylallyl diphosphate + 2 oxidized [2Fe-2S]-[ferredoxin] + H2O = (2E)-4-hydroxy-3-methylbut-2-enyl diphosphate + 2 reduced [2Fe-2S]-[ferredoxin] + 2 H(+). Its pathway is isoprenoid biosynthesis; dimethylallyl diphosphate biosynthesis; dimethylallyl diphosphate from (2E)-4-hydroxy-3-methylbutenyl diphosphate: step 1/1. It functions in the pathway isoprenoid biosynthesis; isopentenyl diphosphate biosynthesis via DXP pathway; isopentenyl diphosphate from 1-deoxy-D-xylulose 5-phosphate: step 6/6. Functionally, catalyzes the conversion of 1-hydroxy-2-methyl-2-(E)-butenyl 4-diphosphate (HMBPP) into a mixture of isopentenyl diphosphate (IPP) and dimethylallyl diphosphate (DMAPP). Acts in the terminal step of the DOXP/MEP pathway for isoprenoid precursor biosynthesis. The polypeptide is 4-hydroxy-3-methylbut-2-enyl diphosphate reductase (Aliivibrio fischeri (strain MJ11) (Vibrio fischeri)).